The chain runs to 344 residues: Heat-inducible transcription repressor HrcA (344 aa).

The protein belongs to the HrcA family.

Functionally, negative regulator of class I heat shock genes (grpE-dnaK-dnaJ and groELS operons). Prevents heat-shock induction of these operons. This is Heat-inducible transcription repressor HrcA from Streptococcus mutans serotype c (strain ATCC 700610 / UA159).